The primary structure comprises 1101 residues: Error-prone DNA polymerase (1101 aa).

A disordered region spans residues 1055 to 1101 (ADLGHPMDSAVGQTTPQTDSAPRPRPQPRAMHPREQAKRLFPSRDFH). Over residues 1065–1074 (VGQTTPQTDS) the composition is skewed to polar residues. Residues 1086–1101 (HPREQAKRLFPSRDFH) show a composition bias toward basic and acidic residues.

This sequence belongs to the DNA polymerase type-C family. DnaE2 subfamily.

It is found in the cytoplasm. It carries out the reaction DNA(n) + a 2'-deoxyribonucleoside 5'-triphosphate = DNA(n+1) + diphosphate. Its function is as follows. DNA polymerase involved in damage-induced mutagenesis and translesion synthesis (TLS). It is not the major replicative DNA polymerase. In Ruegeria pomeroyi (strain ATCC 700808 / DSM 15171 / DSS-3) (Silicibacter pomeroyi), this protein is Error-prone DNA polymerase.